The following is a 605-amino-acid chain: MITKESIENLSQRLNIVDIIENYIEVKKQGSSFVCICPFHADKNPSMHINPIKGFYHCFACKAGGDAFKFVMDYEKLSFADAVEKVASLSNFTLSYTKEKQENKKELKSILPSLNAYFKDNLKHHKEVLTYLYQRALNDKDIAKFELGFAGASEDSIRLLQNQKIPLEDAMSVGALKKDENNEFYASFIWRITFPIYDHKDLLVGFGGRTLNPNVPAKYVNSPQNILFDKSRIFYAFNIAKENIAKKKEIIVCEGYMDAIAFHKAGFNNAVAVLGTALTEHHLPLIRRYDAKVILCFDNDEAGLKAATRSAFLLSTNKIDGKVAILQGGKDPAELVAKNESTKLHNILDEGIELGEFYIRRLISTHSIISALDKQKALETIQKFTFNLEPLVANSYTSLVSNLLKVDEKFIVLSQNSKKTIQTPLISQNKYNFPKEKIHIAELELIAFLKQHPDICNDFKQISDSVCFKHKILLDKILEKKGYEDSDIREFESKNIRKNLNYSEFLLGICKVNLAFLNNVKIKNSTLALKKQLFTLIDKNLNLLIKNLNTAELNNFLKEYLSFLKYEKNEEILQQSFRNLNGIFGNKNFTAYDLGFSIQNNDEPF.

The segment at 37 to 61 (CPFHADKNPSMHINPIKGFYHCFAC) adopts a CHC2-type zinc-finger fold. In terms of domain architecture, Toprim spans 248-329 (KEIIVCEGYM…DGKVAILQGG (82 aa)). Mg(2+) is bound by residues E254, D298, and D300.

It belongs to the DnaG primase family. As to quaternary structure, monomer. Interacts with DnaB. Zn(2+) is required as a cofactor. Requires Mg(2+) as cofactor.

It catalyses the reaction ssDNA + n NTP = ssDNA/pppN(pN)n-1 hybrid + (n-1) diphosphate.. Functionally, RNA polymerase that catalyzes the synthesis of short RNA molecules used as primers for DNA polymerase during DNA replication. The chain is DNA primase from Campylobacter jejuni subsp. jejuni serotype O:2 (strain ATCC 700819 / NCTC 11168).